The chain runs to 162 residues: Cytochrome c-type biogenesis protein CcmE (162 aa).

Residues 1–8 (MNPVRKKR) lie on the Cytoplasmic side of the membrane. The chain crosses the membrane as a helical; Signal-anchor for type II membrane protein span at residues 9–29 (LIIVLAIVAGVGAAVGLALSA). Over 30–162 (LQQNINLFYT…GETSYNQEGK (133 aa)) the chain is Periplasmic. 2 residues coordinate heme: histidine 124 and tyrosine 128. A compositionally biased stretch (basic and acidic residues) spans 139 to 148 (DSGQLKHYEN). Positions 139–162 (DSGQLKHYENGKAAGETSYNQEGK) are disordered.

It belongs to the CcmE/CycJ family.

The protein localises to the cell inner membrane. In terms of biological role, heme chaperone required for the biogenesis of c-type cytochromes. Transiently binds heme delivered by CcmC and transfers the heme to apo-cytochromes in a process facilitated by CcmF and CcmH. This is Cytochrome c-type biogenesis protein CcmE from Pseudomonas aeruginosa (strain ATCC 15692 / DSM 22644 / CIP 104116 / JCM 14847 / LMG 12228 / 1C / PRS 101 / PAO1).